The chain runs to 608 residues: Aspartate--tRNA(Asp/Asn) ligase (608 aa).

An L-aspartate-binding site is contributed by Glu187. Positions 211–214 (QQFK) are aspartate. Arg233 and His461 together coordinate L-aspartate. 233 to 235 (RDE) provides a ligand contact to ATP. Glu495 is a binding site for ATP. Residue Arg502 coordinates L-aspartate. 547-550 (GLDR) provides a ligand contact to ATP.

It belongs to the class-II aminoacyl-tRNA synthetase family. Type 1 subfamily. In terms of assembly, homodimer.

It localises to the cytoplasm. The catalysed reaction is tRNA(Asx) + L-aspartate + ATP = L-aspartyl-tRNA(Asx) + AMP + diphosphate. Aspartyl-tRNA synthetase with relaxed tRNA specificity since it is able to aspartylate not only its cognate tRNA(Asp) but also tRNA(Asn). Reaction proceeds in two steps: L-aspartate is first activated by ATP to form Asp-AMP and then transferred to the acceptor end of tRNA(Asp/Asn). The protein is Aspartate--tRNA(Asp/Asn) ligase of Chlorobium phaeobacteroides (strain BS1).